The following is a 1342-amino-acid chain: DNA-directed RNA polymerase subunit beta (1342 aa).

Belongs to the RNA polymerase beta chain family. As to quaternary structure, the RNAP catalytic core consists of 2 alpha, 1 beta, 1 beta' and 1 omega subunit. When a sigma factor is associated with the core the holoenzyme is formed, which can initiate transcription.

The enzyme catalyses RNA(n) + a ribonucleoside 5'-triphosphate = RNA(n+1) + diphosphate. Its function is as follows. DNA-dependent RNA polymerase catalyzes the transcription of DNA into RNA using the four ribonucleoside triphosphates as substrates. The chain is DNA-directed RNA polymerase subunit beta from Enterobacter sp. (strain 638).